The following is a 258-amino-acid chain: Transmembrane O-methyltransferase homolog (258 aa).

Residues E104, 106-107, S112, E130, and S160 contribute to the S-adenosyl-L-methionine site; that span reads GT.

This sequence belongs to the class I-like SAM-binding methyltransferase superfamily. Cation-dependent O-methyltransferase family. As to quaternary structure, interacts with LHFPL5, PCDH15, TMC1, TMC2 and TMIE. The interaction of TOMT with TMC1 and TMC2 is required for the transportation of TMC1/2 into the stereocilia of hair cells. Interacts directly with TMC1. In terms of tissue distribution, widely expressed with high levels in outer and inner hair cells of the cochlea and vestibule.

The protein localises to the cytoplasm. It localises to the endoplasmic reticulum. It carries out the reaction a catechol + S-adenosyl-L-methionine = a guaiacol + S-adenosyl-L-homocysteine + H(+). Catalyzes the O-methylation, and thereby the inactivation, of catecholamine neurotransmitters and catechol hormones. Required for auditory function. Component of the cochlear hair cell's mechanotransduction (MET) machinery. Involved in the assembly of the asymmetric tip-link MET complex. Required for transportation of TMC1 and TMC2 proteins into the mechanically sensitive stereocilia of the hair cells. The function in MET is independent of the enzymatic activity. This chain is Transmembrane O-methyltransferase homolog, found in Mus musculus (Mouse).